The sequence spans 405 residues: Argininosuccinate synthase (405 aa).

Residues 10 to 18 (AYSGGLDTS) and alanine 37 contribute to the ATP site. Tyrosine 88 and serine 93 together coordinate L-citrulline. Position 118 (glycine 118) interacts with ATP. L-aspartate-binding residues include threonine 120, asparagine 124, and aspartate 125. L-citrulline is bound at residue asparagine 124. Positions 128, 179, 188, 264, and 276 each coordinate L-citrulline.

This sequence belongs to the argininosuccinate synthase family. Type 1 subfamily. In terms of assembly, homotetramer.

It localises to the cytoplasm. It carries out the reaction L-citrulline + L-aspartate + ATP = 2-(N(omega)-L-arginino)succinate + AMP + diphosphate + H(+). Its pathway is amino-acid biosynthesis; L-arginine biosynthesis; L-arginine from L-ornithine and carbamoyl phosphate: step 2/3. This Pseudomonas aeruginosa (strain LESB58) protein is Argininosuccinate synthase.